Consider the following 151-residue polypeptide: Small ribosomal subunit protein bS6 (151 aa).

The interval 97–151 is disordered; sequence EAEPSAMMQKRDRDDRKDRDRGDRPRRRDDDFGGGDRGDRGDRGDRPERNFGGEN. A compositionally biased stretch (basic and acidic residues) spans 105 to 151; that stretch reads QKRDRDDRKDRDRGDRPRRRDDDFGGGDRGDRGDRGDRPERNFGGEN.

This sequence belongs to the bacterial ribosomal protein bS6 family.

Binds together with bS18 to 16S ribosomal RNA. This chain is Small ribosomal subunit protein bS6, found in Methylorubrum extorquens (strain CM4 / NCIMB 13688) (Methylobacterium extorquens).